An 83-amino-acid chain; its full sequence is RNA-binding protein Hfq (83 aa).

One can recognise a Sm domain in the interval 10–69; that stretch reads DPFLNALRREHVPVSIYLVNGIKLQGQIESFDQYVVLLRNTVTQMVYKHAISTIVPGRAV.

It belongs to the Hfq family. In terms of assembly, homohexamer.

Functionally, RNA chaperone that binds small regulatory RNA (sRNAs) and mRNAs to facilitate mRNA translational regulation in response to envelope stress, environmental stress and changes in metabolite concentrations. Also binds with high specificity to tRNAs. This Paracidovorax citrulli (strain AAC00-1) (Acidovorax citrulli) protein is RNA-binding protein Hfq.